A 248-amino-acid polypeptide reads, in one-letter code: 2,3-bisphosphoglycerate-dependent phosphoglycerate mutase (248 aa).

Substrate-binding positions include arginine 8 to asparagine 15, threonine 21 to glycine 22, arginine 60, glutamate 87 to tyrosine 90, lysine 98, arginine 114 to arginine 115, and glycine 183 to asparagine 184. The active-site Tele-phosphohistidine intermediate is the histidine 9. The active-site Proton donor/acceptor is the glutamate 87.

Belongs to the phosphoglycerate mutase family. BPG-dependent PGAM subfamily. In terms of assembly, homodimer.

The catalysed reaction is (2R)-2-phosphoglycerate = (2R)-3-phosphoglycerate. Its pathway is carbohydrate degradation; glycolysis; pyruvate from D-glyceraldehyde 3-phosphate: step 3/5. Functionally, catalyzes the interconversion of 2-phosphoglycerate and 3-phosphoglycerate. This chain is 2,3-bisphosphoglycerate-dependent phosphoglycerate mutase, found in Teredinibacter turnerae (strain ATCC 39867 / T7901).